Consider the following 562-residue polypeptide: Putative transport protein PC1_1686 (562 aa).

Helical transmembrane passes span 8–28, 32–52, 66–86, 93–113, 116–136, and 158–178; these read LLNGNYILLLFVVLSLGLCLG, LGPVQLGNSIGVLVVSLLLGQ, FMLFIFCVGVEAGPNFFSIFF, FMLALVMVGSAMLLALGLGKF, WGIGLTAGMLAGSMTSTPVLV, and HLSLGYALTYLVGLVSLIFGA. RCK C-terminal domains are found at residues 202–288 and 292–373; these read LDAD…NFRD and VFDR…RIGF. A run of 5 helical transmembrane segments spans residues 383–403, 406–426, 447–467, 478–498, and 537–557; these read LLAFCAFFVIGIMVGLITIQF, FTFGIGNAAGLLFAGIMLGFL, FGLMVFMAGVGLSAGSTINSS, SGLIVSLVPVVICFLFGAYVL, and GTYAIANVLLTLAGSLIVIIW.

It belongs to the AAE transporter (TC 2.A.81) family. YbjL subfamily.

It is found in the cell membrane. The chain is Putative transport protein PC1_1686 from Pectobacterium carotovorum subsp. carotovorum (strain PC1).